The primary structure comprises 545 residues: CTP synthase (545 aa).

The tract at residues 1 to 266 (MTTNYIFVTG…DDYICKRFSL (266 aa)) is amidoligase domain. Position 14 (S14) interacts with CTP. S14 lines the UTP pocket. Residues 15 to 20 (SLGKGI) and D72 each bind ATP. Mg(2+) is bound by residues D72 and E140. CTP-binding positions include 147-149 (DIE), 187-192 (KTKPTQ), and K223. UTP contacts are provided by residues 187–192 (KTKPTQ) and K223. Residue 239-241 (KDV) participates in ATP binding. Positions 291-542 (TIGMVGKYIE…VKAASEYQKR (252 aa)) constitute a Glutamine amidotransferase type-1 domain. Residue G352 participates in L-glutamine binding. The active-site Nucleophile; for glutamine hydrolysis is the C379. L-glutamine-binding positions include 380-383 (LGMQ), E403, and R470. Active-site residues include H515 and E517.

Belongs to the CTP synthase family. Homotetramer.

The enzyme catalyses UTP + L-glutamine + ATP + H2O = CTP + L-glutamate + ADP + phosphate + 2 H(+). The catalysed reaction is L-glutamine + H2O = L-glutamate + NH4(+). It carries out the reaction UTP + NH4(+) + ATP = CTP + ADP + phosphate + 2 H(+). It functions in the pathway pyrimidine metabolism; CTP biosynthesis via de novo pathway; CTP from UDP: step 2/2. Allosterically activated by GTP, when glutamine is the substrate; GTP has no effect on the reaction when ammonia is the substrate. The allosteric effector GTP functions by stabilizing the protein conformation that binds the tetrahedral intermediate(s) formed during glutamine hydrolysis. Inhibited by the product CTP, via allosteric rather than competitive inhibition. Functionally, catalyzes the ATP-dependent amination of UTP to CTP with either L-glutamine or ammonia as the source of nitrogen. Regulates intracellular CTP levels through interactions with the four ribonucleotide triphosphates. The polypeptide is CTP synthase (Klebsiella pneumoniae (strain 342)).